We begin with the raw amino-acid sequence, 412 residues long: MGLHLRPYRVGLLPDGLLFLLLLLMLLADPALPAGRHPPVVLVPGDLGNQLEAKLDKPTVVHYLCSKKTESYFTIWLNLELLLPVIIDCWIDNIRLVYNKTSRATQFPDGVDVRVPGFGKTFSLEFLDPSKSSVGSYFHTMVESLVGWGYTRGEDVRGAPYDWRRAPNENGPYFLALREMIEEMYQLYGGPVVLVAHSMGNMYTLYFLQRQPQAWKDKYIRAFVSLGAPWGGVAKTLRVLASGDNNRIPVIGPLKIREQQRSAVSTSWLLPYNYTWSPEKVFVQTPTINYTLRDYRKFFQDIGFEDGWLMRQDTEGLVEATMPPGVQLHCLYGTGVPTPDSFYYESFPDRDPKICFGDGDGTVNLKSALQCQAWQSRQEHQVLLQELPGSEHIEMLANATTLAYLKRVLLGP.

The N-terminal stretch at 1–33 (MGLHLRPYRVGLLPDGLLFLLLLLMLLADPALP) is a signal peptide. Asp46 contacts substrate. A disulfide bond links Cys65 and Cys89. An N-linked (GlcNAc...) asparagine glycan is attached at Asn99. The active-site Acyl-ester intermediate is the Ser198. A Zn(2+)-binding site is contributed by Ser198. A substrate-binding site is contributed by Met199. N-linked (GlcNAc...) asparagine glycosylation is found at Asn273 and Asn289. Residues Asp340 and Cys355 each contribute to the Zn(2+) site. Residues Asp360 and His392 each act as charge relay system in the active site. His392 is a binding site for Zn(2+). An N-linked (GlcNAc...) asparagine glycan is attached at Asn398.

It belongs to the AB hydrolase superfamily. Lipase family. In terms of processing, N-glycosylated. N-glycosylation is important for maturation of the enzyme and normal subcellular location. In terms of tissue distribution, detected in blood plasma (at protein level). Ubiquitous. Highly expressed in heart, placenta, skeletal muscle, kidney and pancreas. Detected at lower levels in spleen, thymus, prostate, testis, ovary, small intestine, colon and peripheral blood leukocytes.

The protein resides in the lysosome. It localises to the secreted. The protein localises to the membrane. The catalysed reaction is a 1,2-diacyl-sn-glycero-3-phosphocholine + H2O = a 2-acyl-sn-glycero-3-phosphocholine + a fatty acid + H(+). It catalyses the reaction 1-hexadecanoyl-2-(9Z-octadecenoyl)-sn-glycero-3-phosphocholine + H2O = 2-(9Z-octadecenoyl)-sn-glycero-3-phosphocholine + hexadecanoate + H(+). It carries out the reaction 1-hexadecanoyl-2-glutaroyl-sn-glycero-3-phosphocholine + H2O = 2-glutaroyl-sn-glycero-3-phosphocholine + hexadecanoate + H(+). The enzyme catalyses 1-hexadecanoyl-2-nonadioyl-sn-glycero-3-phosphocholine + H2O = 2-nonadioyl-sn-glycero-3-phosphocholine + hexadecanoate + H(+). The catalysed reaction is 1-hexadecanoyl-2-(5-oxopentanoyl)-sn-glycero-3-phosphocholine + H2O = 2-(5-oxopentanoyl)-sn-glycero-3-phosphocholine + hexadecanoate + H(+). It catalyses the reaction 1-hexadecanoyl-2-(9-oxononanoyl)-sn-glycero-3-phosphocholine + H2O = 2-(9-oxononanoyl)-sn-glycero-3-phosphocholine + hexadecanoate + H(+). It carries out the reaction 1,2-dihexadecanoyl-sn-glycero-3-phosphocholine + H2O = 2-hexadecanoyl-sn-glycero-3-phosphocholine + hexadecanoate + H(+). The enzyme catalyses a 1,2-diacyl-sn-glycero-3-phosphocholine + H2O = a 1-acyl-sn-glycero-3-phosphocholine + a fatty acid + H(+). The catalysed reaction is 1,2-di-(9Z-octadecenoyl)-sn-glycero-3-phosphocholine + H2O = 1-(9Z-octadecenoyl)-sn-glycero-3-phosphocholine + (9Z)-octadecenoate + H(+). It catalyses the reaction 1-hexadecanoyl-2-(9Z-octadecenoyl)-sn-glycero-3-phosphocholine + H2O = 1-hexadecanoyl-sn-glycero-3-phosphocholine + (9Z)-octadecenoate + H(+). It carries out the reaction 1,2-dihexadecanoyl-sn-glycero-3-phosphocholine + H2O = 1-hexadecanoyl-sn-glycero-3-phosphocholine + hexadecanoate + H(+). The enzyme catalyses a 1-acyl-sn-glycero-3-phosphocholine + H2O = sn-glycerol 3-phosphocholine + a fatty acid + H(+). The catalysed reaction is 1-hexadecanoyl-sn-glycero-3-phosphocholine + H2O = sn-glycerol 3-phosphocholine + hexadecanoate + H(+). It catalyses the reaction N-(acetyl)-sphing-4-enine + a 1,2-diacyl-sn-glycero-3-phosphoethanolamine = 1-O-acyl-N-(acetyl)-sphing-4-enine + a 2-acyl-sn-glycero-3-phosphoethanolamine. It carries out the reaction 1-hexadecanoyl-2-(9Z-octadecenoyl)-sn-glycero-3-phosphoethanolamine + N-(acetyl)-sphing-4-enine = 2-(9Z-octadecenoyl)-sn-glycero-3-phosphoethanolamine + 1-hexadecanoyl-N-(acetyl)-sphing-4-enine. The enzyme catalyses 1-hexadecanoyl-2-(9Z,12Z-octadecadienoyl)-sn-glycero-3-phosphoethanolamine + N-(acetyl)-sphing-4-enine = 2-(9Z,12Z)-octadecadienoyl-sn-glycero-3-phosphoethanolamine + 1-hexadecanoyl-N-(acetyl)-sphing-4-enine. The catalysed reaction is 1-hexadecanoyl-2-(5Z,8Z,11Z,14Z-eicosatetraenoyl)-sn-glycero-3-phosphoethanolamine + N-(acetyl)-sphing-4-enine = 2-(5Z,8Z,11Z,14Z)-eicosatetraenoyl-sn-glycero-3-phosphoethanolamine + 1-hexadecanoyl-N-(acetyl)-sphing-4-enine. It catalyses the reaction N-(acetyl)-sphing-4-enine + a 1,2-diacyl-sn-glycero-3-phosphoethanolamine = 1-O-acyl-N-(acetyl)-sphing-4-enine + a 1-acyl-sn-glycero-3-phosphoethanolamine. It carries out the reaction 1-hexadecanoyl-2-(9Z-octadecenoyl)-sn-glycero-3-phosphoethanolamine + N-(acetyl)-sphing-4-enine = 1-(9Z-octadecenoyl)-N-(acetyl)-sphing-4-enine + 1-hexadecanoyl-sn-glycero-3-phosphoethanolamine. The enzyme catalyses 1-hexadecanoyl-2-(9Z,12Z-octadecadienoyl)-sn-glycero-3-phosphoethanolamine + N-(acetyl)-sphing-4-enine = 1-(9Z,12Z-octadecadienoyl)-N-acetylsphing-4-enine + 1-hexadecanoyl-sn-glycero-3-phosphoethanolamine. The catalysed reaction is 1-hexadecanoyl-2-(5Z,8Z,11Z,14Z-eicosatetraenoyl)-sn-glycero-3-phosphoethanolamine + N-(acetyl)-sphing-4-enine = 1-(5Z,8Z,11Z,14Z)-eicosatetraenoyl-N-(acetyl)-sphing-4-enine + 1-hexadecanoyl-sn-glycero-3-phosphoethanolamine. It catalyses the reaction N-(acetyl)-sphing-4-enine + a 1,2-diacyl-sn-glycero-3-phosphocholine = 1-O-acyl-N-(acetyl)-sphing-4-enine + a 1-acyl-sn-glycero-3-phosphocholine. It carries out the reaction 1-hexadecanoyl-2-(9Z-octadecenoyl)-sn-glycero-3-phosphocholine + N-(acetyl)-sphing-4-enine = 1-(9Z-octadecenoyl)-N-(acetyl)-sphing-4-enine + 1-hexadecanoyl-sn-glycero-3-phosphocholine. The enzyme catalyses 1-hexadecanoyl-2-(9Z,12Z-octadecadienoyl)-sn-glycero-3-phosphocholine + N-(acetyl)-sphing-4-enine = 1-(9Z,12Z-octadecadienoyl)-N-acetylsphing-4-enine + 1-hexadecanoyl-sn-glycero-3-phosphocholine. The catalysed reaction is 1-hexadecanoyl-2-(5Z,8Z,11Z,14Z-eicosatetraenoyl)-sn-glycero-3-phosphocholine + N-(acetyl)-sphing-4-enine = 1-(5Z,8Z,11Z,14Z)-eicosatetraenoyl-N-(acetyl)-sphing-4-enine + 1-hexadecanoyl-sn-glycero-3-phosphocholine. It catalyses the reaction 1-hexadecanoyl-2-(4Z,7Z,10Z,13Z,16Z,19Z-docosahexaenoyl)-sn-glycero-3-phosphocholine + N-(acetyl)-sphing-4-enine = 1-(4Z,7Z,10Z,13Z,16Z,19Z-docosahexaenoyl)-N-(acetyl)-sphing-4-enine + 1-hexadecanoyl-sn-glycero-3-phosphocholine. It carries out the reaction 1-octadecanoyl-2-(9Z-octadecenoyl)-sn-glycero-3-phosphocholine + N-(acetyl)-sphing-4-enine = 1-(9Z-octadecenoyl)-N-(acetyl)-sphing-4-enine + 1-octadecanoyl-sn-glycero-3-phosphocholine. The enzyme catalyses 1-octadecanoyl-2-(9Z,12Z)-octadecadienoyl-sn-glycero-3-phosphocholine + N-(acetyl)-sphing-4-enine = 1-(9Z,12Z-octadecadienoyl)-N-acetylsphing-4-enine + 1-octadecanoyl-sn-glycero-3-phosphocholine. The catalysed reaction is 1-octadecanoyl-2-(5Z,8Z,11Z,14Z-eicosatetraenoyl)-sn-glycero-3-phosphocholine + N-(acetyl)-sphing-4-enine = 1-(5Z,8Z,11Z,14Z)-eicosatetraenoyl-N-(acetyl)-sphing-4-enine + 1-octadecanoyl-sn-glycero-3-phosphocholine. It catalyses the reaction 1-(9Z-octadecenoyl)-2-hexadecanoyl-sn-glycero-3-phosphocholine + N-(acetyl)-sphing-4-enine = 1-hexadecanoyl-N-(acetyl)-sphing-4-enine + 1-(9Z-octadecenoyl)-sn-glycero-3-phosphocholine. It carries out the reaction 1-(9Z)-octadecenoyl-2-octadecanoyl-sn-glycero-3-phosphocholine + N-(acetyl)-sphing-4-enine = 1-octadecanoyl-N-(acetyl)-sphing-4-enine + 1-(9Z-octadecenoyl)-sn-glycero-3-phosphocholine. The enzyme catalyses 1,2-di-(9Z-octadecenoyl)-sn-glycero-3-phosphocholine + N-(acetyl)-sphing-4-enine = 1-(9Z-octadecenoyl)-N-(acetyl)-sphing-4-enine + 1-(9Z-octadecenoyl)-sn-glycero-3-phosphocholine. The catalysed reaction is N-(acetyl)-sphing-4-enine + a 1,2-diacyl-sn-glycero-3-phosphocholine = 1-O-acyl-N-(acetyl)-sphing-4-enine + a 2-acyl-sn-glycero-3-phosphocholine. It catalyses the reaction 1-hexadecanoyl-2-(9Z-octadecenoyl)-sn-glycero-3-phosphocholine + N-(acetyl)-sphing-4-enine = 1-hexadecanoyl-N-(acetyl)-sphing-4-enine + 2-(9Z-octadecenoyl)-sn-glycero-3-phosphocholine. It carries out the reaction 1-hexadecanoyl-2-(9Z,12Z-octadecadienoyl)-sn-glycero-3-phosphocholine + N-(acetyl)-sphing-4-enine = 2-(9Z,12Z-octadecadienoyl)-sn-glycero-3-phosphocholine + 1-hexadecanoyl-N-(acetyl)-sphing-4-enine. The enzyme catalyses 1-hexadecanoyl-2-(5Z,8Z,11Z,14Z-eicosatetraenoyl)-sn-glycero-3-phosphocholine + N-(acetyl)-sphing-4-enine = 1-hexadecanoyl-N-(acetyl)-sphing-4-enine + 2-(5Z,8Z,11Z,14Z)-eicosatetraenoyl-sn-glycero-3-phosphocholine. The catalysed reaction is 1-hexadecanoyl-2-(4Z,7Z,10Z,13Z,16Z,19Z-docosahexaenoyl)-sn-glycero-3-phosphocholine + N-(acetyl)-sphing-4-enine = 2-(4Z,7Z,10Z,13Z,16Z,19Z-docosahexaenoyl)-sn-glycero-3-phosphocholine + 1-hexadecanoyl-N-(acetyl)-sphing-4-enine. It catalyses the reaction 1-hexadecanoyl-2-nonadioyl-sn-glycero-3-phosphocholine + N-(acetyl)-sphing-4-enine = 2-nonadioyl-sn-glycero-3-phosphocholine + 1-hexadecanoyl-N-(acetyl)-sphing-4-enine. It carries out the reaction 1-octadecanoyl-2-(9Z-octadecenoyl)-sn-glycero-3-phosphocholine + N-(acetyl)-sphing-4-enine = 1-octadecanoyl-N-(acetyl)-sphing-4-enine + 2-(9Z-octadecenoyl)-sn-glycero-3-phosphocholine. The enzyme catalyses 1-octadecanoyl-2-(5Z,8Z,11Z,14Z-eicosatetraenoyl)-sn-glycero-3-phosphocholine + N-(acetyl)-sphing-4-enine = 1-octadecanoyl-N-(acetyl)-sphing-4-enine + 2-(5Z,8Z,11Z,14Z)-eicosatetraenoyl-sn-glycero-3-phosphocholine. The catalysed reaction is 1-(9Z-octadecenoyl)-2-hexadecanoyl-sn-glycero-3-phosphocholine + N-(acetyl)-sphing-4-enine = 1-(9Z-octadecenoyl)-N-(acetyl)-sphing-4-enine + 2-hexadecanoyl-sn-glycero-3-phosphocholine. It catalyses the reaction 1-(9Z)-octadecenoyl-2-octadecanoyl-sn-glycero-3-phosphocholine + N-(acetyl)-sphing-4-enine = 2-octadecanoyl-sn-glycero-3-phosphocholine + 1-(9Z-octadecenoyl)-N-(acetyl)-sphing-4-enine. It carries out the reaction a 1,2-diacyl-sn-glycero-3-phospho-L-serine + N-(acetyl)-sphing-4-enine = a 2-acyl-sn-glycero-3-phospho-L-serine + 1-O-acyl-N-(acetyl)-sphing-4-enine. The enzyme catalyses 1-octadecanoyl-2-(9Z-octadecenoyl)-sn-glycero-3-phospho-L-serine + N-(acetyl)-sphing-4-enine = 2-(9Z-octadecenoyl)-sn-glycero-3-phospho-L-serine + 1-octadecanoyl-N-(acetyl)-sphing-4-enine. The catalysed reaction is a 1,2-diacyl-sn-glycero-3-phospho-L-serine + N-(acetyl)-sphing-4-enine = 1-O-acyl-N-(acetyl)-sphing-4-enine + a 1-acyl-sn-glycero-3-phospho-L-serine. It catalyses the reaction 1-octadecanoyl-2-(9Z-octadecenoyl)-sn-glycero-3-phospho-L-serine + N-(acetyl)-sphing-4-enine = 1-octadecanoyl-sn-glycero-3-phosphoserine + 1-(9Z-octadecenoyl)-N-(acetyl)-sphing-4-enine. It carries out the reaction a 1,2-diacyl-sn-glycero-3-phospho-(1'-sn-glycerol) + N-(acetyl)-sphing-4-enine = 2-acyl-sn-glycero-3-phospho-(1'-sn-glycerol) + 1-O-acyl-N-(acetyl)-sphing-4-enine. The enzyme catalyses 1-octadecanoyl-2-(9Z-octadecenoyl)-sn-glycero-3-phospho-(1'-sn-glycerol) + N-(acetyl)-sphing-4-enine = 2-(9Z-octadecenoyl)-sn-glycero-3-phospho-(1'-sn-glycerol) + 1-octadecanoyl-N-(acetyl)-sphing-4-enine. The catalysed reaction is a 1,2-diacyl-sn-glycero-3-phospho-(1'-sn-glycerol) + N-(acetyl)-sphing-4-enine = 1-O-acyl-N-(acetyl)-sphing-4-enine + 1-acyl-sn-glycero-3-phospho-(1'-sn-glycerol). It catalyses the reaction 1-octadecanoyl-2-(9Z-octadecenoyl)-sn-glycero-3-phospho-(1'-sn-glycerol) + N-(acetyl)-sphing-4-enine = 1-octadecanoyl-sn-glycero-3-phospho-(1'-sn-glycerol) + 1-(9Z-octadecenoyl)-N-(acetyl)-sphing-4-enine. It carries out the reaction an N-acylethanolamine + a 1,2-diacyl-sn-glycero-3-phosphocholine = 2-(acylamino)ethyl fatty acid + a 2-acyl-sn-glycero-3-phosphocholine. The enzyme catalyses an N-acylethanolamine + a 1,2-diacyl-sn-glycero-3-phosphocholine = 2-(acylamino)ethyl fatty acid + a 1-acyl-sn-glycero-3-phosphocholine. The catalysed reaction is N-(5Z,8Z,11Z,14Z-eicosatetraenoyl)-ethanolamine + 1,2-di-(9Z-octadecenoyl)-sn-glycero-3-phosphocholine = 2-[(5Z,8Z,11Z,14Z)-eicosatetraenoylamino]ethyl (9Z)-octadecenoate + (9Z-octadecenoyl)-sn-glycero-3-phosphocholine. It catalyses the reaction N-(9Z-octadecenoyl) ethanolamine + 1,2-di-(9Z-octadecenoyl)-sn-glycero-3-phosphocholine = 2-[(9Z)-octadecenoylamino]ethyl (9Z)-octadecenoate + (9Z-octadecenoyl)-sn-glycero-3-phosphocholine. It carries out the reaction a 3-acyl-sn-glycerol + a 1,2-diacyl-sn-glycero-3-phosphocholine = a 1,3-diacylglycerol + a 1-acyl-sn-glycero-3-phosphocholine. The enzyme catalyses a 3-acyl-sn-glycerol + a 1,2-diacyl-sn-glycero-3-phosphocholine = a 1,3-diacylglycerol + a 2-acyl-sn-glycero-3-phosphocholine. The catalysed reaction is 3-(9Z-octadecenoyl)-sn-glycerol + 1,2-di-(9Z-octadecenoyl)-sn-glycero-3-phosphocholine = 1,3-di-(9Z-octadecenoyl)-glycerol + (9Z-octadecenoyl)-sn-glycero-3-phosphocholine. It catalyses the reaction 3-hexadecanoyl-sn-glycerol + 1,2-di-(9Z-octadecenoyl)-sn-glycero-3-phosphocholine = 1-(9Z)-octadecenoyl-3-hexadecanoyl-sn-glycerol + (9Z-octadecenoyl)-sn-glycero-3-phosphocholine. It carries out the reaction a 1-acyl-sn-glycerol + a 1,2-diacyl-sn-glycero-3-phosphocholine = a 1,3-diacylglycerol + a 2-acyl-sn-glycero-3-phosphocholine. The enzyme catalyses a 1-acyl-sn-glycerol + a 1,2-diacyl-sn-glycero-3-phosphocholine = a 1,3-diacylglycerol + a 1-acyl-sn-glycero-3-phosphocholine. The catalysed reaction is 1-(9Z-octadecenoyl)-sn-glycerol + 1,2-di-(9Z-octadecenoyl)-sn-glycero-3-phosphocholine = 1,3-di-(9Z-octadecenoyl)-glycerol + (9Z-octadecenoyl)-sn-glycero-3-phosphocholine. It catalyses the reaction 1-hexadecanoyl-sn-glycerol + 1,2-di-(9Z-octadecenoyl)-sn-glycero-3-phosphocholine = 1-hexadecanoyl-3-(9Z)-octadecenoyl-sn-glycerol + (9Z-octadecenoyl)-sn-glycero-3-phosphocholine. It carries out the reaction a 2-acylglycerol + a 1,2-diacyl-sn-glycero-3-phosphocholine = a 1,2-diacylglycerol + a 2-acyl-sn-glycero-3-phosphocholine. The enzyme catalyses a 2-acylglycerol + a 1,2-diacyl-sn-glycero-3-phosphocholine = a 1,2-diacylglycerol + a 1-acyl-sn-glycero-3-phosphocholine. The catalysed reaction is 2-hexadecanoylglycerol + 1,2-di-(9Z-octadecenoyl)-sn-glycero-3-phosphocholine = 1-(9Z)-octadecenoyl-2-hexadecanoylglycerol + (9Z-octadecenoyl)-sn-glycero-3-phosphocholine. It catalyses the reaction 1-O-alkylglycerol + a 1,2-diacyl-sn-glycero-3-phosphocholine = 1-O-alkyl-3-acylglycerol + a 1-acyl-sn-glycero-3-phosphocholine. It carries out the reaction 1-O-alkylglycerol + a 1,2-diacyl-sn-glycero-3-phosphocholine = 1-O-alkyl-3-acylglycerol + a 2-acyl-sn-glycero-3-phosphocholine. The enzyme catalyses 1-O-hexadecylglycerol + 1,2-di-(9Z-octadecenoyl)-sn-glycero-3-phosphocholine = 1-O-hexadecyl-3-(9Z)-octadecenoylglycerol + (9Z-octadecenoyl)-sn-glycero-3-phosphocholine. The catalysed reaction is 1-O-alkyl-2-acyl-sn-glycerol + a 1,2-diacyl-sn-glycero-3-phosphocholine = 1-O-alkyl-2,3-diacyl-sn-glycerol + a 2-acyl-sn-glycero-3-phosphocholine. It catalyses the reaction 1-O-alkyl-2-acyl-sn-glycerol + a 1,2-diacyl-sn-glycero-3-phosphocholine = 1-O-alkyl-2,3-diacyl-sn-glycerol + a 1-acyl-sn-glycero-3-phosphocholine. It carries out the reaction 1-O-hexadecyl-2-acetyl-sn-glycerol + 1,2-di-(9Z-octadecenoyl)-sn-glycero-3-phosphocholine = 1-O-hexadecyl-2-acetyl-3-(9Z)-octadecenoyl-sn-glycerol + (9Z-octadecenoyl)-sn-glycero-3-phosphocholine. The enzyme catalyses 1-O-hexadecyl-2-O-methyl-sn-glycerol + 1,2-di-(9Z-octadecenoyl)-sn-glycero-3-phosphocholine = 1-O-hexadecyl-2-O-methyl-3-(9Z)-octadecenoyl-sn-glycerol + (9Z-octadecenoyl)-sn-glycero-3-phosphocholine. The catalysed reaction is a 1,2-diacyl-sn-glycero-3-phosphoethanolamine + H2O = a 1-acyl-sn-glycero-3-phosphoethanolamine + a fatty acid + H(+). It catalyses the reaction 1-acyl-2-(5Z,8Z,11Z,14Z)-eicosatetraenoyl-sn-glycero-3-phosphoethanolamine + H2O = a 1-acyl-sn-glycero-3-phosphoethanolamine + (5Z,8Z,11Z,14Z)-eicosatetraenoate + H(+). It carries out the reaction a 1,2-diacyl-sn-glycero-3-phospho-(1'-sn-glycerol) + H2O = 1-acyl-sn-glycero-3-phospho-(1'-sn-glycerol) + a fatty acid + H(+). The enzyme catalyses 1-hexadecanoyl-2-(9Z-octadecenoyl)-sn-glycero-3-phospho-(1'-sn-glycerol) + H2O = 1-hexadecanoyl-sn-glycero-3-phospho-(1'-sn-glycerol) + (9Z)-octadecenoate + H(+). The catalysed reaction is a 1,2-diacyl-sn-glycero-3-phospho-(1'-sn-glycerol) + H2O = 2-acyl-sn-glycero-3-phospho-(1'-sn-glycerol) + a fatty acid + H(+). It catalyses the reaction 1-hexadecanoyl-2-(9Z-octadecenoyl)-sn-glycero-3-phospho-(1'-sn-glycerol) + H2O = 2-(9Z-octadecenoyl)-sn-glycero-3-phospho-(1'-sn-glycerol) + hexadecanoate + H(+). Its activity is regulated as follows. Inhibited by zinc ions at neutral pH. Zinc ions in plasma may keep the enzyme from hydrolyzing inappropriate substrates. In terms of biological role, has dual calcium-independent phospholipase and O-acyltransferase activities with a potential role in glycerophospholipid homeostasis and remodeling of acyl groups of lipophilic alcohols present in acidic cellular compartments. Catalyzes hydrolysis of the ester bond of the fatty acyl group attached at sn-1 or sn-2 position of phospholipids (phospholipase A1 or A2 activity) and transfer it to the hydroxyl group at the first carbon of lipophilic alcohols (O-acyltransferase activity). Among preferred fatty acyl donors are phosphatidylcholines, phosphatidylethanolamines, phosphatidylglycerols and phosphatidylserines. Favors sn-2 over sn-1 deacylation of unsaturated fatty acyl groups of phosphatidylcholines, phosphatidylethanolamines, and phosphatidylglycerols. Among preferred fatty acyl acceptors are natural lipophilic alcohols including short-chain ceramide N-acetyl-sphingosine (C2 ceramide), alkylacylglycerols, monoacylglycerols, and acylethanolamides such as anandamide and oleoylethanolamide. Selectively hydrolyzes the sn-1 fatty acyl group of truncated oxidized phospholipids and may play a role in detoxification of reactive oxidized phospholipids during oxidative stress. Required for normal phospholipid degradation in alveolar macrophages with potential implications in the clearance of pulmonary surfactant, which is mainly composed of dipalmitoylphosphatidylcholine (1,2-dihexadecanoyl-sn-glycero-3-phosphocholine). Involved in the first step of bis(monoacylglycero)phosphate (BMP) de novo synthesis from phosphatidylglycerol (1,2-diacyl-sn-glycero-3-phospho-(1'-sn-glycerol), PG). BMP is an important player in cargo sorting and degradation, regulation of cellular cholesterol levels and intercellular communication. At neutral pH, hydrolyzes the sn-1 fatty acyl group of the lysophosphatidylcholines. This Homo sapiens (Human) protein is Lysosomal phospholipase A and acyltransferase.